A 331-amino-acid polypeptide reads, in one-letter code: Glycerophosphodiester phosphodiesterase 1 (331 aa).

Topologically, residues 1-3 (MWL) are cytoplasmic. A helical membrane pass occupies residues 4 to 24 (WEDQGGLLGPFSFVLVLLLVV). Residues 25–248 (TRSPFNACVL…PRYSVFWKQS (224 aa)) lie on the Lumenal side of the membrane. The region spanning 65–331 (VSAIAHRGGS…SMLEDCAPHF (267 aa)) is the GP-PDE domain. Mg(2+) contacts are provided by Glu-97 and Asp-99. The N-linked (GlcNAc...) asparagine glycan is linked to Asn-168. Residue Asp-174 coordinates Mg(2+). A helical membrane pass occupies residues 249–269 (VFVVLDILLDWSMHNVLWYLC). Topologically, residues 270–331 (GISAFLMQKD…SMLEDCAPHF (62 aa)) are cytoplasmic.

This sequence belongs to the glycerophosphoryl diester phosphodiesterase family. In terms of assembly, interacts with PRAF2. Interacts with RGS16. The cofactor is Mg(2+). N-glycosylated. As to expression, detected in heart, brain, lung, liver, skeletal muscle, kidney, pituitary and testis.

Its subcellular location is the cell membrane. It is found in the cytoplasmic vesicle membrane. The catalysed reaction is sn-glycero-3-phospho-1D-myo-inositol + H2O = myo-inositol + sn-glycerol 3-phosphate + H(+). It carries out the reaction 1-O-(1Z-octadecenyl)-sn-glycero-3-phospho-(N-5Z,8Z,11Z,14Z-eicosatetraenoyl)-ethanolamine + H2O = 1-O-(1Z-octadecenyl)-sn-glycero-3-phosphate + N-(5Z,8Z,11Z,14Z-eicosatetraenoyl)-ethanolamine + H(+). The enzyme catalyses 1-O-(1Z-octadecenyl)-sn-glycero-3-phospho-(N-9Z-octadecenoyl)-ethanolamine + H2O = 1-O-(1Z-octadecenyl)-sn-glycero-3-phosphate + N-(9Z-octadecenoyl) ethanolamine + H(+). It catalyses the reaction 1-O-(1Z-octadecenyl)-sn-glycero-3-phospho-N-hexadecanoyl-ethanolamine + H2O = 1-O-(1Z-octadecenyl)-sn-glycero-3-phosphate + N-hexadecanoylethanolamine + H(+). The catalysed reaction is N-(4Z,7Z,10Z,13Z,16Z,19Z)-docosahexaenoyl-sn-glycero-3-phosphoethanolamine + H2O = N-(4Z,7Z,10Z,13Z,16Z,19Z)-docosahexaenoyl ethanolamine + sn-glycerol 3-phosphate + H(+). It carries out the reaction N-eicosanoyl-sn-glycero-3-phosphoethanolamine + H2O = N-eicosanoyl ethanolamine + sn-glycerol 3-phosphate + H(+). The enzyme catalyses N-hexadecanoyl-sn-glycero-3-phosphoethanolamine + H2O = N-hexadecanoylethanolamine + sn-glycerol 3-phosphate + H(+). It catalyses the reaction N-(9Z-octadecenoyl)-sn-glycero-3-phosphoethanolamine + H2O = N-(9Z-octadecenoyl) ethanolamine + sn-glycerol 3-phosphate + H(+). The catalysed reaction is N-(5Z,8Z,11Z,14Z-eicosatetraenoyl)-sn-glycero-3-phosphoethanolamine + H2O = N-(5Z,8Z,11Z,14Z-eicosatetraenoyl)-ethanolamine + sn-glycerol 3-phosphate + H(+). Its activity is regulated as follows. Inhibited by EDTA, calcium chloride, and zinc chloride. Enhanced by magnesium chloride. Glycerophosphodiester phosphodiesterase activity can be modulated by G-protein signaling pathways. Hydrolyzes the phosphodiester bond of glycerophosphodiesters such as glycerophosphoinositol (GroPIns) and glycerophosphoethanolamine (GroPEth), to yield a glycerol phosphate and an alcohol. Hydrolyzes glycerophospho-N-acylethanolamines to N-acylethanolamines in the brain and participates in bioactive N-acylethanolamine biosynthesis such as anandamide (an endocannabinoid), N-palmitoylethanolamine (an anti-inflammatory), and N-oleoylethanolamine (an anorexic). In addition, has a lysophospholipase D activity by hydrolyzing N-acyl-lysoplasmenylethanolamine (N-acyl-lysoPlsEt) to N-acylethanolamine. However lysophospholipase D activity is lower than glycerophosphodiester phosphodiesterase activity. Has little or no activity towards glycerophosphocholine. This Rattus norvegicus (Rat) protein is Glycerophosphodiester phosphodiesterase 1.